Consider the following 399-residue polypeptide: Aromatic-amino-acid aminotransferase (399 aa).

Residues G36, Y67, W132, and N184 each contribute to the substrate site. Position 247 is an N6-(pyridoxal phosphate)lysine (K247). Substrate is bound at residue R375.

It belongs to the class-I pyridoxal-phosphate-dependent aminotransferase family. As to quaternary structure, homodimer. The cofactor is pyridoxal 5'-phosphate.

The protein resides in the cytoplasm. It carries out the reaction an aromatic L-alpha-amino acid + 2-oxoglutarate = an aromatic oxo-acid + L-glutamate. This is Aromatic-amino-acid aminotransferase (phhC) from Pseudomonas aeruginosa (strain ATCC 15692 / DSM 22644 / CIP 104116 / JCM 14847 / LMG 12228 / 1C / PRS 101 / PAO1).